Consider the following 20-residue polypeptide: Protein PR-L6 (20 aa).

This sequence belongs to the BetVI family.

The polypeptide is Protein PR-L6 (Lupinus luteus (European yellow lupine)).